The sequence spans 414 residues: Protein phosphatase 2C homolog 3 (414 aa).

The PPM-type phosphatase domain maps to 23 to 288 (LYGLSSMQGW…DNMTVCIVAL (266 aa)). Positions 62, 63, 230, and 279 each coordinate Mn(2+). Disordered regions lie at residues 313 to 368 (APPE…TNGS) and 380 to 414 (FPHK…SAAD). The span at 350–363 (GYDKDANENSKEDD) shows a compositional bias: basic and acidic residues. Residues 390 to 400 (SSETDIVNSNK) show a composition bias toward polar residues. Residues 401–414 (DVADDHKEAVSAAD) show a composition bias toward basic and acidic residues.

The protein belongs to the PP2C family. In terms of assembly, monomer. Requires Mg(2+) as cofactor. It depends on Mn(2+) as a cofactor.

Its subcellular location is the cytoplasm. It is found in the nucleus. The catalysed reaction is O-phospho-L-seryl-[protein] + H2O = L-seryl-[protein] + phosphate. It carries out the reaction O-phospho-L-threonyl-[protein] + H2O = L-threonyl-[protein] + phosphate. Its function is as follows. Dephosphorylating regulator for many key proteins. Has an important role in osmotic stability and cell shape control. It may negatively regulate the osmosensing signal transmitted through wis1 map kinase. This is Protein phosphatase 2C homolog 3 (ptc3) from Schizosaccharomyces pombe (strain 972 / ATCC 24843) (Fission yeast).